The following is a 158-amino-acid chain: Fluoride-specific ion channel FluC 2 (158 aa).

4 helical membrane-spanning segments follow: residues 25–45 (AWHG…IGGT), 63–83 (WTTF…MVVI), 95–115 (PFFG…AVDI), and 126–146 (TALA…RLAA). Residues Gly103 and Thr106 each contribute to the Na(+) site.

Belongs to the fluoride channel Fluc/FEX (TC 1.A.43) family.

The protein resides in the cell membrane. The enzyme catalyses fluoride(in) = fluoride(out). Its activity is regulated as follows. Na(+) is not transported, but it plays an essential structural role and its presence is essential for fluoride channel function. In terms of biological role, fluoride-specific ion channel. Important for reducing fluoride concentration in the cell, thus reducing its toxicity. The chain is Fluoride-specific ion channel FluC 2 from Streptomyces avermitilis (strain ATCC 31267 / DSM 46492 / JCM 5070 / NBRC 14893 / NCIMB 12804 / NRRL 8165 / MA-4680).